The chain runs to 378 residues: Queuine tRNA-ribosyltransferase (378 aa).

Catalysis depends on aspartate 89, which acts as the Proton acceptor. Residues 89–93 (DSGGF), aspartate 143, glutamine 194, and glycine 221 each bind substrate. An RNA binding region spans residues 252–258 (GVGTPAN). Aspartate 271 acts as the Nucleophile in catalysis. The Zn(2+) site is built by cysteine 309, cysteine 311, cysteine 314, and histidine 340.

This sequence belongs to the queuine tRNA-ribosyltransferase family. In terms of assembly, homodimer. Within each dimer, one monomer is responsible for RNA recognition and catalysis, while the other monomer binds to the replacement base PreQ1. It depends on Zn(2+) as a cofactor.

The catalysed reaction is 7-aminomethyl-7-carbaguanine + guanosine(34) in tRNA = 7-aminomethyl-7-carbaguanosine(34) in tRNA + guanine. It participates in tRNA modification; tRNA-queuosine biosynthesis. Functionally, catalyzes the base-exchange of a guanine (G) residue with the queuine precursor 7-aminomethyl-7-deazaguanine (PreQ1) at position 34 (anticodon wobble position) in tRNAs with GU(N) anticodons (tRNA-Asp, -Asn, -His and -Tyr). Catalysis occurs through a double-displacement mechanism. The nucleophile active site attacks the C1' of nucleotide 34 to detach the guanine base from the RNA, forming a covalent enzyme-RNA intermediate. The proton acceptor active site deprotonates the incoming PreQ1, allowing a nucleophilic attack on the C1' of the ribose to form the product. After dissociation, two additional enzymatic reactions on the tRNA convert PreQ1 to queuine (Q), resulting in the hypermodified nucleoside queuosine (7-(((4,5-cis-dihydroxy-2-cyclopenten-1-yl)amino)methyl)-7-deazaguanosine). The protein is Queuine tRNA-ribosyltransferase of Lachnospira eligens (strain ATCC 27750 / DSM 3376 / VPI C15-48 / C15-B4) (Eubacterium eligens).